Consider the following 626-residue polypeptide: MQANLQWLDDPEVFRVNQLPAHSDHHYYHDTAEFKTGSRFIKSLNGAWRFNFAKTPAERPVDFYQPDFDATDFDTIQVPGHIELAGYGQIQYINTLYPWEGKIYRRPPYTLNQDQLTPGLFSDAADNTVGSYLKTFDLDDVFKGQRIIIQFQGVEEALYVWLNGHFIGYSEDSFTPSEFDLTPYIQDQGNVLAVRVYKHSTAAFIEDQDMFRFSGIFRDVNILAEPASHITDLDIRPVPNANLKSGELNITTKVTGEPATLALTVKDHDGRVLTSQTQTGSGSVTFDTMLFDQLHLWSPQTPYLYQLTIEVYDADHQLLEVVPYQFGFRTVELRDDKVIYVNNKRLVINGVNRHEWNAHTGRVISMADMRADIQTMLANNINADRTCHYPDQLPWYQLCDEAGIYLMAETNLESHGSWQKMGAIEPSYNVPGDNPHWPAAVIDRARSNYEWFKNHPSIIFWSLGNESYAGEDIAAMQAFYKEHDDSRLVHYEGVFYTPELKDRISDVESRMYEKPQNIVAYLEDNPTKPFLNCEYMHDMGNSLGGMQSYNDLIDKYPMYQGGFIWDFIDQALFVHDPITDQDVLRYGGDFDERHSDYAFSGNGLMFADRTPKPAMQEVKYYYGLHK.

Residue glutamate 466 is the Proton donor of the active site. Glutamate 534 (nucleophile) is an active-site residue.

The protein belongs to the glycosyl hydrolase 2 family. Heterodimer of a large (LacL) and a small subunit (LacM).

The catalysed reaction is Hydrolysis of terminal non-reducing beta-D-galactose residues in beta-D-galactosides.. Its function is as follows. Component of a beta-galactosidase that displays activity with the artificial chromogenic substrate o-nitrophenyl-beta-D-galactopyranoside (ONPG). In Leuconostoc lactis, this protein is Beta-galactosidase large subunit.